Consider the following 97-residue polypeptide: uncharacterized protein (97 aa).

The protein to M.thermoautotrophicum MTH1236.

This is an uncharacterized protein from Methanocaldococcus jannaschii (strain ATCC 43067 / DSM 2661 / JAL-1 / JCM 10045 / NBRC 100440) (Methanococcus jannaschii).